The primary structure comprises 510 residues: Maturase K (510 aa).

This sequence belongs to the intron maturase 2 family. MatK subfamily.

It is found in the plastid. The protein resides in the chloroplast. Functionally, usually encoded in the trnK tRNA gene intron. Probably assists in splicing its own and other chloroplast group II introns. The polypeptide is Maturase K (Populus nigra (Lombardy poplar)).